A 657-amino-acid polypeptide reads, in one-letter code: Chemoreceptor McpA (657 aa).

Over 1–5 (MKRIR) the chain is Cytoplasmic. The chain crosses the membrane as a helical span at residues 6 to 29 (LVDLPLIIKIGFAPAFALLMLAVM). Over 30–188 (AGGAILVQKS…ESESAKRQAQ (159 aa)) the chain is Periplasmic. A helical membrane pass occupies residues 189–212 (ATAAMSVTIIMSLLTLGAVGALAF). At 213–657 (LTVMTTRKSI…APASDGWEEF (445 aa)) the chain is on the cytoplasmic side. HAMP domains lie at 216–269 (MTTR…HLEQ) and 297–349 (QEAS…ETMK). The region spanning 354-583 (STDGLSTGAD…QSTAATHSLK (230 aa)) is the Methyl-accepting transducer domain. Gln378 bears the Glutamate methyl ester (Gln) mark. Glutamate methyl ester (Glu) is present on residues Glu385 and Glu392. Position 574 is a glutamate methyl ester (Gln) (Gln574). The segment at 634 to 657 (ARPGRSSGSAALAQAPASDGWEEF) is disordered.

It belongs to the methyl-accepting chemotaxis (MCP) protein family.

The protein localises to the cell membrane. Functionally, chemotactic-signal transducers respond to changes in the concentration of attractants and repellents in the environment, transduce a signal from the outside to the inside of the cell, and facilitate sensory adaptation through the variation of the level of methylation. Attractants increase the level of methylation while repellents decrease the level of methylation. In Caulobacter vibrioides (strain ATCC 19089 / CIP 103742 / CB 15) (Caulobacter crescentus), this protein is Chemoreceptor McpA (mcpA).